The following is a 321-amino-acid chain: Glucokinase (321 aa).

ATP is bound at residue 8 to 13 (GDVGGT).

The protein belongs to the bacterial glucokinase family.

The protein localises to the cytoplasm. It carries out the reaction D-glucose + ATP = D-glucose 6-phosphate + ADP + H(+). This chain is Glucokinase, found in Salmonella paratyphi B (strain ATCC BAA-1250 / SPB7).